Reading from the N-terminus, the 377-residue chain is MTTQFSVAGIELELFRYPASQESNLQAWDAADEHLINTLVEGGQTAVPTAIINDNFGALSCALSRLTPDWPLNVETDARTSFLGAEQNHLRNQLPMDNLTWFTSRDALPGDLALVLMKLPKNLTYFAHQLMRLSQVLPAGCKVLVGAKAKSINASLLEVFAKYLGPASASLAWKKTRVITCISDGKPRALPKEITWDIPEFNLHISNLSNVFAANKLDIGARIMLDNLPQGDFKTIVDLGCGNGVLGLRAAQLYPNANIHFIDDSEMAVASAKANWANNQLPAEKGHFHWDDCMTHLPDGVEPDLVLCNPPFHQGEAITDHIAWQMFLDARRRLKNGGILHIVGNRHLAYHVKLQRLFKNCTTVASNGKFVILQAQR.

It belongs to the methyltransferase superfamily. RlmG family.

It localises to the cytoplasm. It carries out the reaction guanosine(1835) in 23S rRNA + S-adenosyl-L-methionine = N(2)-methylguanosine(1835) in 23S rRNA + S-adenosyl-L-homocysteine + H(+). Its function is as follows. Specifically methylates the guanine in position 1835 (m2G1835) of 23S rRNA. This Shewanella sp. (strain MR-4) protein is Ribosomal RNA large subunit methyltransferase G.